Consider the following 455-residue polypeptide: Protein U54 (455 aa).

The protein belongs to the herpesviridae UL82 family.

The sequence is that of Protein U54 (U54) from Homo sapiens (Human).